The chain runs to 149 residues: Protein K7 (149 aa).

The protein belongs to the orthopoxvirus OPG044 family. As to quaternary structure, interacts with DDX3; this interaction inhibits DDX3 and suppresses DDX3-mediated IFN-beta promoter induction. Interacts with TRAF6 and IRAK2; these interactions suppress TLR-dependent NF-KappaB activation.

The protein localises to the host cytoplasm. Its function is as follows. Virulence factor that affects the acute immune response to infection. Bcl-2-like protein which, through its interaction with the DEAD box RNA helicase DDX3X/DDX3, prevents TBK1/IKKepsilon-mediated IRF3 activation. Contributes to virulence by binding to the host TRAF6 and IRAK2 and preventing host NF-kappa-B activation. In Cynomys gunnisoni (Gunnison's prairie dog), this protein is Protein K7 (OPG044).